The sequence spans 231 residues: NADH-ubiquinone oxidoreductase chain 4 (231 aa).

6 helical membrane-spanning segments follow: residues 1–21 (PIAG…YGII), 34–54 (LFLP…LTCL), 63–85 (IAYS…TPWG), 89–111 (AMAL…NTTY), 118–138 (ILIL…WWLL), and 156–176 (LLIM…LGLS).

The protein belongs to the complex I subunit 4 family.

Its subcellular location is the mitochondrion membrane. It carries out the reaction a ubiquinone + NADH + 5 H(+)(in) = a ubiquinol + NAD(+) + 4 H(+)(out). Core subunit of the mitochondrial membrane respiratory chain NADH dehydrogenase (Complex I) that is believed to belong to the minimal assembly required for catalysis. Complex I functions in the transfer of electrons from NADH to the respiratory chain. The immediate electron acceptor for the enzyme is believed to be ubiquinone. The polypeptide is NADH-ubiquinone oxidoreductase chain 4 (MT-ND4) (Ovophis okinavensis (Ryukyu Island pit viper)).